The chain runs to 790 residues: Nitrogen permease reactivator protein (790 aa).

A disordered region spans residues 1 to 68 (MSSLTRLLQE…DRNRANVPVP (68 aa)). Positions 16-38 (TSNSSPRTSADTLTTTPESQSLD) are enriched in polar residues. Positions 46–58 (SSHIGSVSNSSSS) are enriched in low complexity. A Phosphoserine; by autocatalysis modification is found at serine 47. Phosphoserine is present on residues serine 85, serine 90, serine 100, serine 111, serine 116, serine 125, serine 137, and serine 141. Positions 151–175 (RLSTTSHTSGRAIPSLSSSIPYSVP) are enriched in polar residues. 2 disordered regions span residues 151-188 (RLSTTSHTSGRAIPSLSSSIPYSVPNSNKDNNSSNSNS) and 234-258 (LQKASMDSNNANATQSRSISRSGSF). Residues 176 to 188 (NSNKDNNSSNSNS) are compositionally biased toward low complexity. Polar residues predominate over residues 238 to 248 (SMDSNNANATQ). Residues 249 to 258 (SRSISRSGSF) show a composition bias toward low complexity. At serine 257 the chain carries Phosphoserine; by autocatalysis. 7 positions are modified to phosphoserine: serine 259, serine 260, serine 288, serine 292, serine 317, serine 320, and serine 328. The span at 276–289 (NSNSAGMSFSANSN) shows a compositional bias: low complexity. Positions 276–357 (NSNSAGMSFS…QSVPRSQHSS (82 aa)) are disordered. 3 stretches are compositionally biased toward polar residues: residues 290-305 (GPSPNIKNPNVTNGST), 314-339 (RQSSIYSASRQPTGSYTDNFYGSPSS), and 346-357 (PSQSVPRSQHSS). Tyrosine 334 bears the Phosphotyrosine mark. 3 positions are modified to phosphoserine: serine 336, serine 353, and serine 356. Serine 357 carries the phosphoserine; by autocatalysis modification. Serine 385 carries the phosphoserine modification. A Protein kinase domain is found at 438–742 (IKTGADLGAG…IEEIMEDPWI (305 aa)). Residues 444-452 (LGAGAGGSV) and lysine 467 contribute to the ATP site. Catalysis depends on aspartate 561, which acts as the Proton acceptor. Disordered stretches follow at residues 666 to 704 (LVTRTPDPPSYDESHSTEKKKPESSSNNVSDPNNVNIGP) and 766 to 790 (HHTQVDQSEAHIAGLEKKKKKQNNQ). The segment covering 677 to 688 (DESHSTEKKKPE) has biased composition (basic and acidic residues). The segment covering 689–701 (SSSNNVSDPNNVN) has biased composition (low complexity).

This sequence belongs to the protein kinase superfamily. Ser/Thr protein kinase family. As to quaternary structure, interacts with TIP41. In terms of processing, hyperphosphorylated in nitrogen-rich growth medium. Nitrogen limitation (or rapamycin treatment) leads to substantial, though not complete dephosphorylation. Autophosphorylation plays only a minor role and seems not to be regulated by the quality of the nitrogen source.

The protein resides in the cytoplasm. It carries out the reaction L-seryl-[protein] + ATP = O-phospho-L-seryl-[protein] + ADP + H(+). The catalysed reaction is L-threonyl-[protein] + ATP = O-phospho-L-threonyl-[protein] + ADP + H(+). Its activity is regulated as follows. Dephosphorylation by SIT4 activates NPR1 kinase activity. Nutrient-regulated protein kinase that promotes the activity of at least 6 distinct transport systems for nitrogenous nutrients under conditions of nitrogen catabolite derepression. Under poor nitrogen growth conditions, required for post-Golgi sorting of the general amino acid permease GAP1 and the three known ammonia permeases, MEP1/2/3, to the plasma membrane. Also contributes to the stability and the retention of GAP1 at the plasma membrane. Inversely, promotes the degradation of tryptophan permease TAT2 under the same conditions. Activity is regulated by the TOR signaling pathway via phosphatase SIT4. Although thought to be involved in regulation of GLN3-dependent transcription by nitrogen catabolite repression, this seems to be an indirect effect from the reduced uptake of the nitrogen-repressing compound. The sequence is that of Nitrogen permease reactivator protein (NPR1) from Saccharomyces cerevisiae (strain ATCC 204508 / S288c) (Baker's yeast).